A 174-amino-acid polypeptide reads, in one-letter code: Beta-lactoglobulin (174 aa).

The N-terminal stretch at 1–18 (MKFLLLTVGLALIGAIQA) is a signal peptide. Cystine bridges form between Cys79-Cys172 and Cys122-Cys134.

It belongs to the calycin superfamily. Lipocalin family. In terms of assembly, monomer.

It localises to the secreted. Functionally, lactoglobulin is the primary component of whey, it binds retinol and is probably involved in the transport of that molecule. In Notamacropus eugenii (Tammar wallaby), this protein is Beta-lactoglobulin (LGB).